A 917-amino-acid polypeptide reads, in one-letter code: Spermatogenesis-associated protein 31D4 (917 aa).

The chain crosses the membrane as a helical span at residues Phe29 to Leu49. 3 disordered regions span residues Glu55–Lys80, Ser152–Leu195, and Ser773–Ser798. Positions His63 to Val74 are enriched in basic residues. The span at Ser152–Ala163 shows a compositional bias: low complexity. Over residues Glu164–Thr177 the composition is skewed to polar residues. A compositionally biased stretch (basic and acidic residues) spans Leu782–Ser798.

Belongs to the SPATA31 family.

The protein resides in the membrane. In terms of biological role, may play a role in spermatogenesis. This is Spermatogenesis-associated protein 31D4 (SPATA31D4) from Homo sapiens (Human).